A 146-amino-acid chain; its full sequence is Ubiquitin-conjugating enzyme E2 variant 1D (146 aa).

The UBC core domain maps to 13 to 146 (PRNFRLLEEL…LVQPPEGTCF (134 aa)).

This sequence belongs to the ubiquitin-conjugating enzyme family. Heterodimer with UBC35 or UBC36. As to expression, expressed in roots, shoots, leaves, stems, flowers and pollen.

In terms of biological role, has no ubiquitin ligase activity on its own. The heterodimer with UBC catalyzes the synthesis of non-canonical poly-ubiquitin chains that are linked through 'Lys-63'. This type of poly-ubiquitination does not lead to protein degradation by the proteasome. Mediates transcriptional activation of target genes. May play a role in the control of progress through the cell cycle and differentiation. Involved in the error-free DNA repair pathway and contributes to the survival of cells after DNA damage. The sequence is that of Ubiquitin-conjugating enzyme E2 variant 1D (UEV1D) from Arabidopsis thaliana (Mouse-ear cress).